The sequence spans 636 residues: Sodium-dependent proline transporter (636 aa).

The Cytoplasmic portion of the chain corresponds to 1–45 (MKKLQGAHLRKPVTPDLLMTPSDQGDVDLDVDFAAHRGNWTGKLD). A Phosphothreonine modification is found at Thr-20. Ser-22 bears the Phosphoserine mark. The next 3 helical transmembrane spans lie at 46–66 (FLLS…FPYR), 74–93 (AFLV…LFFL), and 117–137 (GAGA…NMII). The Extracellular segment spans residues 138–214 (AYVLFYLFAS…QGIGSPGEIR (77 aa)). Asn-182 carries N-linked (GlcNAc...) asparagine glycosylation. 9 helical membrane passes run 215-233 (WNLC…LCIL), 242-259 (VVYF…MLLV), 295-312 (IFYS…FASY), 324-345 (FIVT…FSVL), 378-397 (LPLS…TLGL), 425-443 (VFSG…ILTT), 459-479 (SFGL…VYGI), 500-519 (ACWL…YSIV), and 538-556 (LGIL…GMLV). Residues 557 to 636 (AVLREEGSLW…EIAEEEESMM (80 aa)) are Cytoplasmic-facing. Phosphoserine occurs at positions 573 and 582. Position 588 is a phosphothreonine (Thr-588). At Tyr-591 the chain carries Phosphotyrosine. Residues Ser-598 and Ser-600 each carry the phosphoserine modification.

Belongs to the sodium:neurotransmitter symporter (SNF) (TC 2.A.22) family. SLC6A7 subfamily. In terms of tissue distribution, brain specific (at protein level). Highly expressed in hippocampus, corpus striatum and temporal cortex. Also expressed in frontal cortex, occipital cortex and, at lower levels, in cerebellum and parietal cortex (at protein level).

The protein resides in the synaptic cell membrane. The catalysed reaction is L-proline(out) + chloride(out) + 2 Na(+)(out) = L-proline(in) + chloride(in) + 2 Na(+)(in). The enzyme catalyses L-pipecolate(out) + chloride(out) + 2 Na(+)(out) = L-pipecolate(in) + chloride(in) + 2 Na(+)(in). Its function is as follows. Brain specific sodium (and chloride)-dependent proline transporter. Terminates the action of proline by its high affinity sodium-dependent reuptake into presynaptic terminals. This Homo sapiens (Human) protein is Sodium-dependent proline transporter.